The chain runs to 1174 residues: Male determiner protein Mdmd(II) (1174 aa).

Over residues 1–15 (MNATDAESRKPENKP) the composition is skewed to basic and acidic residues. 3 disordered regions span residues 1–51 (MNAT…SGQR), 80–109 (KDGSNEMLPKEDSINTNHNYTTDSNEHPVE), and 136–259 (KQLS…LRRS). A compositionally biased stretch (low complexity) spans 16–35 (SSESSSSGSTSGSSDGEVSS). Positions 36–47 (KTYFKNNKSKVL) are enriched in polar residues. The span at 80 to 92 (KDGSNEMLPKEDS) shows a compositional bias: basic and acidic residues. The span at 93–102 (INTNHNYTTD) shows a compositional bias: polar residues. Over residues 138–153 (LSAYRSRSRSTRLSYS) the composition is skewed to low complexity. The segment covering 183–200 (HGRDSSTTKRSVSRDKDN) has biased composition (basic and acidic residues). The segment covering 201-223 (RLRRRIGSSRSHTRSHSRFRRSE) has biased composition (basic residues). Over residues 235 to 259 (RSQERRHERRRSMSSDYERIALRRS) the composition is skewed to basic and acidic residues. The MIF4G domain maps to 348–531 (KKYIHGYINK…KVLFQVRRDG (184 aa)). Residues 597–608 (DSDGSFGSGSNS) show a composition bias toward low complexity. The interval 597 to 616 (DSDGSFGSGSNSETALSDCD) is disordered. An MI domain is found at 641–757 (ALRRTIYLTL…SWDVLDCIKL (117 aa)). Residues 840–857 (SAPSSSSSSSLSSELSAP) show a composition bias toward low complexity. Disordered stretches follow at residues 840-1045 (SAPS…SRTK) and 1095-1133 (RKDNYGNRQNHEISQRHDSEIKRRREERKKRHHEKNHSR). Residues 869–909 (KKKHKGKNKKMTKKKNPSKKKEKTKKIVGKNKIAAKNKTIK) are compositionally biased toward basic residues. Basic and acidic residues predominate over residues 910–924 (RRTDKDNSSSKDNFL). A compositionally biased stretch (low complexity) spans 926–957 (SESSSNESISLDSLSSELFAPSSYSSSESSND). Over residues 963–1001 (KHKGKNKKMTKKKNPSNKREKTKKKLSKNKKAPNKNTKK) the composition is skewed to basic residues. The span at 1010-1020 (SSESSISESKS) shows a compositional bias: low complexity. Residues 1034 to 1045 (RKKRVTSKSRTK) show a composition bias toward basic residues. Residues 1095-1118 (RKDNYGNRQNHEISQRHDSEIKRR) are compositionally biased toward basic and acidic residues. Over residues 1119–1130 (REERKKRHHEKN) the composition is skewed to basic residues.

It belongs to the CWC22 family. In terms of assembly, component of the spliceosome C complex.

The protein resides in the nucleus speckle. Functionally, male determiner protein (M-factor) that controls male somatic sexual differentiation. Acts as a dominant factor that regulates the mRNA splicing of transformer (tra) and doublesex (dsx) transcripts and promotes expression of male splice forms of tra and dsx. Probably acts as a component of the spliceosome C complex required for mRNA splicing factor and exon-junction complex (EJC) assembly. Hinders eIF4AIII from non-specifically binding RNA and escorts it to the splicing machinery to promote EJC assembly on mature mRNAs. The chain is Male determiner protein Mdmd(II) from Musca domestica (House fly).